We begin with the raw amino-acid sequence, 236 residues long: Small ribosomal subunit protein uS2c (236 aa).

The protein belongs to the universal ribosomal protein uS2 family.

The protein localises to the plastid. The protein resides in the chloroplast. This Olimarabidopsis pumila (Dwarf rocket) protein is Small ribosomal subunit protein uS2c (rps2).